A 412-amino-acid polypeptide reads, in one-letter code: Multifunctional CCA protein (412 aa).

The ATP site is built by Gly8 and Arg11. Gly8 and Arg11 together coordinate CTP. The Mg(2+) site is built by Asp21 and Asp23. The ATP site is built by Arg91, Arg137, and Arg140. Arg91, Arg137, and Arg140 together coordinate CTP. The region spanning 228–329 is the HD domain; sequence TGIHTLMTLS…VKLFDSIDAW (102 aa).

This sequence belongs to the tRNA nucleotidyltransferase/poly(A) polymerase family. Bacterial CCA-adding enzyme type 1 subfamily. As to quaternary structure, monomer. Can also form homodimers and oligomers. Requires Mg(2+) as cofactor. Ni(2+) is required as a cofactor.

The enzyme catalyses a tRNA precursor + 2 CTP + ATP = a tRNA with a 3' CCA end + 3 diphosphate. The catalysed reaction is a tRNA with a 3' CCA end + 2 CTP + ATP = a tRNA with a 3' CCACCA end + 3 diphosphate. Catalyzes the addition and repair of the essential 3'-terminal CCA sequence in tRNAs without using a nucleic acid template. Adds these three nucleotides in the order of C, C, and A to the tRNA nucleotide-73, using CTP and ATP as substrates and producing inorganic pyrophosphate. tRNA 3'-terminal CCA addition is required both for tRNA processing and repair. Also involved in tRNA surveillance by mediating tandem CCA addition to generate a CCACCA at the 3' terminus of unstable tRNAs. While stable tRNAs receive only 3'-terminal CCA, unstable tRNAs are marked with CCACCA and rapidly degraded. In Escherichia coli (strain SMS-3-5 / SECEC), this protein is Multifunctional CCA protein.